Reading from the N-terminus, the 255-residue chain is tRNA (guanine-N(1)-)-methyltransferase (255 aa).

Residues Gly-113 and 133–138 each bind S-adenosyl-L-methionine; that span reads IGDYVL.

The protein belongs to the RNA methyltransferase TrmD family. In terms of assembly, homodimer.

The protein localises to the cytoplasm. It carries out the reaction guanosine(37) in tRNA + S-adenosyl-L-methionine = N(1)-methylguanosine(37) in tRNA + S-adenosyl-L-homocysteine + H(+). Its function is as follows. Specifically methylates guanosine-37 in various tRNAs. This chain is tRNA (guanine-N(1)-)-methyltransferase, found in Klebsiella pneumoniae subsp. pneumoniae (strain ATCC 700721 / MGH 78578).